The sequence spans 460 residues: Proline--tRNA ligase (460 aa).

The protein belongs to the class-II aminoacyl-tRNA synthetase family. ProS type 3 subfamily. In terms of assembly, homodimer.

The protein localises to the cytoplasm. It catalyses the reaction tRNA(Pro) + L-proline + ATP = L-prolyl-tRNA(Pro) + AMP + diphosphate. Functionally, catalyzes the attachment of proline to tRNA(Pro) in a two-step reaction: proline is first activated by ATP to form Pro-AMP and then transferred to the acceptor end of tRNA(Pro). This chain is Proline--tRNA ligase, found in Methanococcus maripaludis (strain DSM 14266 / JCM 13030 / NBRC 101832 / S2 / LL).